Reading from the N-terminus, the 151-residue chain is Methylated-DNA--protein-cysteine methyltransferase (151 aa).

Cys-119 (nucleophile; methyl group acceptor) is an active-site residue.

Belongs to the MGMT family.

The protein localises to the cytoplasm. It catalyses the reaction a 6-O-methyl-2'-deoxyguanosine in DNA + L-cysteinyl-[protein] = S-methyl-L-cysteinyl-[protein] + a 2'-deoxyguanosine in DNA. The catalysed reaction is a 4-O-methyl-thymidine in DNA + L-cysteinyl-[protein] = a thymidine in DNA + S-methyl-L-cysteinyl-[protein]. In terms of biological role, involved in the cellular defense against the biological effects of O6-methylguanine (O6-MeG) and O4-methylthymine (O4-MeT) in DNA. Repairs the methylated nucleobase in DNA by stoichiometrically transferring the methyl group to a cysteine residue in the enzyme. This is a suicide reaction: the enzyme is irreversibly inactivated. This Saccharolobus islandicus (strain M.16.27) (Sulfolobus islandicus) protein is Methylated-DNA--protein-cysteine methyltransferase.